Consider the following 595-residue polypeptide: Probable serine/threonine-protein kinase fhkC (595 aa).

Positions 1–84 are disordered; sequence MNSNKEETTA…MTEDNSKEED (84 aa). A compositionally biased stretch (low complexity) spans 18 to 31; sequence EEQQQQQQPQQQEQ. Polar residues predominate over residues 32–49; it reads INTTTASTTSNGENTASD. Residues 50-70 are compositionally biased toward low complexity; sequence NNNNSNNNNNNNTNNTNTNNN. Positions 116–170 constitute an FHA domain; it reads IILGRSKGVCNYTFTSPTVSGKHCKIYRDPTVKSRNVAFVDDTSTNGTFINNEVI. One can recognise a Protein kinase domain in the interval 218 to 479; sequence YDLREVLGTG…IDQALNHPWF (262 aa). Residues 224-232 and Lys-247 contribute to the ATP site; that span reads LGTGNFASV. The Proton acceptor role is filled by Asp-342. Thr-377 is subject to Phosphothreonine; by autocatalysis. The interval 494–595 is disordered; the sequence is KLEFPPPSTN…DEHEQKKVKN (102 aa). Positions 508-520 are enriched in polar residues; that stretch reads PTPNTTSSNSQLV. The segment covering 530-567 has biased composition (low complexity); that stretch reads DNTTDNNNNNNNNNNNNNNNNNNNTTNNSNNIDNNNGN. A compositionally biased stretch (basic and acidic residues) spans 585 to 595; it reads NDEHEQKKVKN.

This sequence belongs to the protein kinase superfamily. CAMK Ser/Thr protein kinase family. CHK2 subfamily.

It catalyses the reaction L-seryl-[protein] + ATP = O-phospho-L-seryl-[protein] + ADP + H(+). The enzyme catalyses L-threonyl-[protein] + ATP = O-phospho-L-threonyl-[protein] + ADP + H(+). This chain is Probable serine/threonine-protein kinase fhkC (fhkC), found in Dictyostelium discoideum (Social amoeba).